A 122-amino-acid polypeptide reads, in one-letter code: Small ribosomal subunit protein uS13 (122 aa).

A disordered region spans residues 97–122 (PVRGQRTHTNARTRKGPAKAIAGKKK).

It belongs to the universal ribosomal protein uS13 family. In terms of assembly, part of the 30S ribosomal subunit. Forms a loose heterodimer with protein S19. Forms two bridges to the 50S subunit in the 70S ribosome.

Located at the top of the head of the 30S subunit, it contacts several helices of the 16S rRNA. In the 70S ribosome it contacts the 23S rRNA (bridge B1a) and protein L5 of the 50S subunit (bridge B1b), connecting the 2 subunits; these bridges are implicated in subunit movement. Contacts the tRNAs in the A and P-sites. The chain is Small ribosomal subunit protein uS13 from Brucella abortus (strain S19).